The following is a 323-amino-acid chain: Methionyl-tRNA formyltransferase (323 aa).

117 to 120 lines the (6S)-5,6,7,8-tetrahydrofolate pocket; that stretch reads SLLP.

It belongs to the Fmt family.

It carries out the reaction L-methionyl-tRNA(fMet) + (6R)-10-formyltetrahydrofolate = N-formyl-L-methionyl-tRNA(fMet) + (6S)-5,6,7,8-tetrahydrofolate + H(+). Its function is as follows. Attaches a formyl group to the free amino group of methionyl-tRNA(fMet). The formyl group appears to play a dual role in the initiator identity of N-formylmethionyl-tRNA by promoting its recognition by IF2 and preventing the misappropriation of this tRNA by the elongation apparatus. In Acidovorax ebreus (strain TPSY) (Diaphorobacter sp. (strain TPSY)), this protein is Methionyl-tRNA formyltransferase.